A 269-amino-acid polypeptide reads, in one-letter code: Mitochondrial distribution and morphology protein 12 (269 aa).

The SMP-LTD domain maps to 1–269 (MSLEVNWEQI…WPNWIEFQGV (269 aa)). The interval 72 to 119 (ERAGTGEGDEDDGRVAPTSTPMKHQTSGSSDQTDASNPISPSTSHDHE) is disordered. Residues 88–114 (PTSTPMKHQTSGSSDQTDASNPISPST) are compositionally biased toward polar residues.

It belongs to the MDM12 family. As to quaternary structure, component of the ER-mitochondria encounter structure (ERMES) or MDM complex, composed of MMM1, MDM10, MDM12 and MDM34. An MMM1 homodimer associates with one molecule of MDM12 on each side in a pairwise head-to-tail manner, and the SMP-LTD domains of MMM1 and MDM12 generate a continuous hydrophobic tunnel for phospholipid trafficking.

The protein resides in the mitochondrion outer membrane. It localises to the endoplasmic reticulum membrane. Its function is as follows. Component of the ERMES/MDM complex, which serves as a molecular tether to connect the endoplasmic reticulum (ER) and mitochondria. Components of this complex are involved in the control of mitochondrial shape and protein biogenesis, and function in nonvesicular lipid trafficking between the ER and mitochondria. MDM12 is required for the interaction of the ER-resident membrane protein MMM1 and the outer mitochondrial membrane-resident beta-barrel protein MDM10. The MDM12-MMM1 subcomplex functions in the major beta-barrel assembly pathway that is responsible for biogenesis of all mitochondrial outer membrane beta-barrel proteins, and acts in a late step after the SAM complex. The MDM10-MDM12-MMM1 subcomplex further acts in the TOM40-specific pathway after the action of the MDM12-MMM1 complex. Essential for establishing and maintaining the structure of mitochondria and maintenance of mtDNA nucleoids. This is Mitochondrial distribution and morphology protein 12 from Komagataella phaffii (strain GS115 / ATCC 20864) (Yeast).